A 185-amino-acid polypeptide reads, in one-letter code: Adenylyl-sulfate kinase (185 aa).

An ATP-binding site is contributed by 13–20 (GLSGAGKT). Serine 87 (phosphoserine intermediate) is an active-site residue.

The protein belongs to the APS kinase family.

The enzyme catalyses adenosine 5'-phosphosulfate + ATP = 3'-phosphoadenylyl sulfate + ADP + H(+). It functions in the pathway sulfur metabolism; hydrogen sulfide biosynthesis; sulfite from sulfate: step 2/3. Its function is as follows. Catalyzes the synthesis of activated sulfate. In Halothermothrix orenii (strain H 168 / OCM 544 / DSM 9562), this protein is Adenylyl-sulfate kinase.